The sequence spans 330 residues: Aspartate--ammonia ligase (330 aa).

This sequence belongs to the class-II aminoacyl-tRNA synthetase family. AsnA subfamily.

The protein resides in the cytoplasm. It catalyses the reaction L-aspartate + NH4(+) + ATP = L-asparagine + AMP + diphosphate + H(+). Its pathway is amino-acid biosynthesis; L-asparagine biosynthesis; L-asparagine from L-aspartate (ammonia route): step 1/1. The sequence is that of Aspartate--ammonia ligase from Escherichia coli O45:K1 (strain S88 / ExPEC).